The chain runs to 205 residues: RPW8-like protein 2 (205 aa).

Positions 1-153 constitute an RPW8 domain; that stretch reads MPLTEIIAGA…IMGQPIDCII (153 aa). Residues 7 to 23 traverse the membrane as a helical segment; it reads IAGAALGLALQILHEAI. Coiled coils occupy residues 70–92 and 125–147; these read EDLK…LKRR and ADIK…IMGQ.

This sequence belongs to the plant RPW8 protein family.

It localises to the membrane. Probable disease resistance (R) protein. This Arabidopsis thaliana (Mouse-ear cress) protein is RPW8-like protein 2.